The primary structure comprises 564 residues: Arginine--tRNA ligase (564 aa).

The short motif at 122-132 is the 'HIGH' region element; it reads PNIAKPFSIGH.

It belongs to the class-I aminoacyl-tRNA synthetase family. Monomer.

It localises to the cytoplasm. It catalyses the reaction tRNA(Arg) + L-arginine + ATP = L-arginyl-tRNA(Arg) + AMP + diphosphate. The chain is Arginine--tRNA ligase from Lactococcus lactis subsp. cremoris (strain MG1363).